The chain runs to 355 residues: tRNA uridine(34) hydroxylase (355 aa).

The 95-residue stretch at 146–240 folds into the Rhodanese domain; sequence KDPDALFVDM…YVRTAKKKDL (95 aa). Cysteine 200 (cysteine persulfide intermediate) is an active-site residue.

It belongs to the TrhO family.

It catalyses the reaction uridine(34) in tRNA + AH2 + O2 = 5-hydroxyuridine(34) in tRNA + A + H2O. In terms of biological role, catalyzes oxygen-dependent 5-hydroxyuridine (ho5U) modification at position 34 in tRNAs. The chain is tRNA uridine(34) hydroxylase from Hamiltonella defensa subsp. Acyrthosiphon pisum (strain 5AT).